Here is a 595-residue protein sequence, read N- to C-terminus: Probable L-gulonolactone oxidase 1 (595 aa).

Residues 1–18 form the signal peptide; sequence MAFWLSLIFFCFCTFASS. The FAD-binding PCMH-type domain maps to 47–229; the sequence is SICEAAKVEY…SQVTFQLQPM (183 aa).

This sequence belongs to the oxygen-dependent FAD-linked oxidoreductase family. Requires FAD as cofactor.

It catalyses the reaction L-gulono-1,4-lactone + O2 = L-ascorbate + H2O2 + H(+). The protein operates within cofactor biosynthesis; L-ascorbate biosynthesis. May be involved in the biosynthesis of ascorbic acid. This chain is Probable L-gulonolactone oxidase 1, found in Arabidopsis thaliana (Mouse-ear cress).